A 147-amino-acid polypeptide reads, in one-letter code: Large ribosomal subunit protein bL9 (147 aa).

Belongs to the bacterial ribosomal protein bL9 family.

In terms of biological role, binds to the 23S rRNA. The chain is Large ribosomal subunit protein bL9 from Geotalea daltonii (strain DSM 22248 / JCM 15807 / FRC-32) (Geobacter daltonii).